Reading from the N-terminus, the 772-residue chain is Ion-translocating oxidoreductase complex subunit C (772 aa).

4Fe-4S ferredoxin-type domains are found at residues 369–397 and 407–436; these read GEPQ…QQLY and KATT…VQYF. Cysteine 377, cysteine 380, cysteine 383, cysteine 387, cysteine 416, cysteine 419, cysteine 422, and cysteine 426 together coordinate [4Fe-4S] cluster. 3 disordered regions span residues 602–684, 696–717, and 727–746; these read KLEQ…DPRK, ARKL…PRKA, and KARK…QVDP. The span at 605-615 shows a compositional bias: low complexity; the sequence is QQQANAEPEQQ.

This sequence belongs to the 4Fe4S bacterial-type ferredoxin family. RnfC subfamily. The complex is composed of six subunits: RsxA, RsxB, RsxC, RsxD, RsxE and RsxG. It depends on [4Fe-4S] cluster as a cofactor.

The protein localises to the cell inner membrane. Part of a membrane-bound complex that couples electron transfer with translocation of ions across the membrane. Required to maintain the reduced state of SoxR. This chain is Ion-translocating oxidoreductase complex subunit C, found in Escherichia coli O157:H7 (strain EC4115 / EHEC).